We begin with the raw amino-acid sequence, 662 residues long: MRPQILLLLALLTLGLAAQRQDKVPCKMVDKKVSCQGLGLLQVPSVLPPDTETLDLSGNQLRSILASPLGFYTALRHLDLSTNEISFLQPGAFQALTHLEHLSLAHNRLAMATALSAGGLGPLPRVTSLDLSGNSLYSGLLERLLGEAPSLHTLSLAENSLTRLTRHTFRDMPVLEQLDLHSNVLMDIEDGAFEGLPRLTHLNLSRNSLTCISDFSLQQLRVLDLSCNSIEAFQTASQPQAEFQLTWLDLRENKLLHFPDLAALPRLIYLNLSNNLIRLPTGPPQDSKGIHAPSEGWSALPLSTPSWNASARPLSQLLNLDLSYNEIELIPDSFLEHLTSLCFLNLSRNCLRTFEARRSGSLPCLMLLDLSHNALETLELGARALGSLRTLLLQGNALRDLPPYTFANLASLQRLNLQGNRVSPCGGPDEPGPSGCVAFSGITSLHSLSLVDNEIELLRAGAFLHTPLTELDLSSNPGLEVATGALGGLEASLEVLALQGNGLTVLQVDLPCFICLKRLNLAENRLSHLPAWTQAVSLEVLDLRNNSFSLLPGSAMGGLETSLRRLYLQGNPLSCCGNGWLAAQLHQGRVDVDATQDLICRFSSQEEVSLSHVRPEDCEKGGLKNINLIIILTFILVSAILLTTLATCCCVRRQKFNQQYKA.

Residues 1–17 (MRPQILLLLALLTLGLA) form the signal peptide. Residues 18–625 (AQRQDKVPCK…EDCEKGGLKN (608 aa)) lie on the Extracellular side of the membrane. In terms of domain architecture, LRRNT spans 21–48 (QDKVPCKMVDKKVSCQGLGLLQVPSVLP). LRR repeat units lie at residues 50 to 73 (DTETLDLSGNQLRSILASPLGFYT), 74 to 95 (ALRHLDLSTNEISFLQPGAFQA), 98 to 119 (HLEHLSLAHNRLAMATALSAGG), 125 to 145 (RVTSLDLSGNSLYSGLLERLL), 150 to 171 (SLHTLSLAENSLTRLTRHTFRD), 174 to 195 (VLEQLDLHSNVLMDIEDGAFEG), 198 to 219 (RLTHLNLSRNSLTCISDFSLQQ), 220 to 240 (LRVLDLSCNSIEAFQTASQPQ), 244 to 265 (QLTWLDLRENKLLHFPDLAALP), and 266 to 286 (RLIYLNLSNNLIRLPTGPPQD). Residue Asn-203 is glycosylated (N-linked (GlcNAc...) asparagine). N-linked (GlcNAc...) asparagine glycans are attached at residues Asn-271 and Asn-308. 10 LRR repeats span residues 316-339 (QLLNLDLSYNEIELIPDSFLEHLT), 340-361 (SLCFLNLSRNCLRTFEARRSGS), 364-385 (CLMLLDLSHNALETLELGARAL), 387-408 (SLRTLLLQGNALRDLPPYTFAN), 411-432 (SLQRLNLQGNRVSPCGGPDEPG), 444-465 (SLHSLSLVDNEIELLRAGAFLH), 467-488 (PLTELDLSSNPGLEVATGALGG), 492-513 (SLEVLALQGNGLTVLQVDLPCF), 515-536 (CLKRLNLAENRLSHLPAWTQAV), and 537-558 (SLEVLDLRNNSFSLLPGSAMGG). A glycan (N-linked (GlcNAc...) asparagine) is linked at Asn-345. Asn-545 carries N-linked (GlcNAc...) asparagine glycosylation. The region spanning 571–620 (NPLSCCGNGWLAAQLHQGRVDVDATQDLICRFSSQEEVSLSHVRPEDCEK) is the LRRCT domain. A helical transmembrane segment spans residues 626-646 (INLIIILTFILVSAILLTTLA). Residues 647–662 (TCCCVRRQKFNQQYKA) are Cytoplasmic-facing.

The protein belongs to the LRRC32/LRRC33 family. As to quaternary structure, interacts with TGFB1; associates via disulfide bonds with the Latency-associated peptide chain (LAP) regulatory chain of TGFB1, leading to regulate activation of TGF-beta-1. Interacts with TGFB2. Interacts with TGFB3; associates via disulfide bonds with the Latency-associated peptide chain (LAP) regulatory chain of TGFB3, leading to regulate activation of TGF-beta-3. Interacts with LAPTM4B; decreases TGFB1 production in regulatory T-cells.

It is found in the cell membrane. It localises to the cell surface. Functionally, key regulator of transforming growth factor beta (TGFB1, TGFB2 and TGFB3) that controls TGF-beta activation by maintaining it in a latent state during storage in extracellular space. Associates specifically via disulfide bonds with the Latency-associated peptide (LAP), which is the regulatory chain of TGF-beta, and regulates integrin-dependent activation of TGF-beta. Able to outcompete LTBP1 for binding to LAP regulatory chain of TGF-beta. Controls activation of TGF-beta-1 (TGFB1) on the surface of activated regulatory T-cells (Tregs). Required for epithelial fusion during palate development by regulating activation of TGF-beta-3 (TGFB3). This chain is Transforming growth factor beta activator LRRC32, found in Pongo abelii (Sumatran orangutan).